Consider the following 448-residue polypeptide: Homogentisate 1,2-dioxygenase (448 aa).

The active-site Proton acceptor is H303. 2 residues coordinate Fe cation: H346 and E352. Residues Y361 and H382 each coordinate homogentisate. H382 is a binding site for Fe cation.

This sequence belongs to the homogentisate dioxygenase family. In terms of assembly, hexamer; dimer of trimers. Requires Fe cation as cofactor.

The enzyme catalyses homogentisate + O2 = 4-maleylacetoacetate + H(+). The protein operates within amino-acid degradation; L-phenylalanine degradation; acetoacetate and fumarate from L-phenylalanine: step 4/6. In terms of biological role, involved in the catabolism of homogentisate (2,5-dihydroxyphenylacetate or 2,5-OH-PhAc), a central intermediate in the degradation of phenylalanine and tyrosine. Catalyzes the oxidative ring cleavage of the aromatic ring of homogentisate to yield maleylacetoacetate. This is Homogentisate 1,2-dioxygenase from Rhodopseudomonas palustris (strain BisB5).